The sequence spans 2341 residues: Pecanex-like protein 1 (2341 aa).

The next 2 helical transmembrane spans lie at 28-50 (ATFV…FTLY) and 57-74 (MIIV…FIVL). The disordered stretch occupies residues 98–163 (FTDQRTKAEQ…SNQIGSGSSR (66 aa)). The N-linked (GlcNAc...) asparagine glycan is linked to Asn-109. Positions 143-163 (SSRNSYAGLDPSNQIGSGSSR) are enriched in polar residues. Asn-215 is a glycosylation site (N-linked (GlcNAc...) asparagine). 3 disordered regions span residues 270-294 (HSHS…VAFP), 311-331 (DPVS…SLVE), and 344-689 (DLKI…TRAR). Residues 272–282 (HSYRKDHRPRG) are compositionally biased toward basic residues. Polar residues-rich tracts occupy residues 320–331 (KPLSGSKESLVE) and 347–356 (INTSQPPTKS). Asn-348 is a glycosylation site (N-linked (GlcNAc...) asparagine). Positions 370–388 (SLRSLSTRSSGSTESYCSG) are enriched in low complexity. The N-linked (GlcNAc...) asparagine glycan is linked to Asn-394. Positions 394-404 (NSTVSSYKSEQ) are enriched in polar residues. Composition is skewed to basic and acidic residues over residues 430-455 (KKEC…EKIA), 465-478 (HEAK…EMHN), and 527-544 (SKVR…DVRP). Over residues 554 to 569 (ASAHKSGRRRTGKKRA) the composition is skewed to basic residues. The segment covering 605–635 (QSDLSRASSVQSAHQFSSDSSSSTTSHSCQS) has biased composition (low complexity). A glycan (N-linked (GlcNAc...) asparagine) is linked at Asn-702. A disordered region spans residues 756–834 (QVAFPEGEEQ…STAQVKVQSR (79 aa)). Low complexity predominate over residues 814–832 (LSLQDGQQGQQSTAQVKVQ). 2 N-linked (GlcNAc...) asparagine glycosylation sites follow: Asn-852 and Asn-863. A run of 3 helical transmembrane segments spans residues 1003-1025 (ILEN…ILLI), 1032-1049 (IWVF…YSLL), and 1067-1089 (IAYS…DYGS). N-linked (GlcNAc...) asparagine glycosylation is present at Asn-1091. Residues 1110–1132 (FISARDLVIVFTLCFPIVFFIGL) traverse the membrane as a helical segment. Asn-1155 is a glycosylation site (N-linked (GlcNAc...) asparagine). The next 4 helical transmembrane spans lie at 1160–1182 (LLAA…GLCY), 1194–1213 (IPVL…YHLS), 1266–1288 (LVVC…FTVL), and 1295–1312 (VLYT…YVLP). N-linked (GlcNAc...) asparagine glycans are attached at residues Asn-1579, Asn-1720, Asn-1982, Asn-2062, and Asn-2072. 2 disordered regions span residues 2062-2120 (NATT…SPAR) and 2217-2237 (GQSS…NNSH). 3 stretches are compositionally biased toward polar residues: residues 2069–2078 (PHSNVTQGSI), 2096–2114 (YPPT…SGLV), and 2217–2236 (GQSS…ANNS). N-linked (GlcNAc...) asparagine glycans are attached at residues Asn-2234 and Asn-2260.

The protein belongs to the pecanex family.

Its subcellular location is the membrane. The protein is Pecanex-like protein 1 of Homo sapiens (Human).